The primary structure comprises 347 residues: Beta-hexosaminidase (347 aa).

Substrate-binding positions include D64, R72, R138, and 168 to 169; that span reads KH. H181 (proton donor/acceptor) is an active-site residue. Residue D251 is the Nucleophile of the active site.

Belongs to the glycosyl hydrolase 3 family. NagZ subfamily.

Its subcellular location is the cytoplasm. It catalyses the reaction Hydrolysis of terminal non-reducing N-acetyl-D-hexosamine residues in N-acetyl-beta-D-hexosaminides.. It functions in the pathway cell wall biogenesis; peptidoglycan recycling. In terms of biological role, plays a role in peptidoglycan recycling by cleaving the terminal beta-1,4-linked N-acetylglucosamine (GlcNAc) from peptide-linked peptidoglycan fragments, giving rise to free GlcNAc, anhydro-N-acetylmuramic acid and anhydro-N-acetylmuramic acid-linked peptides. In Thioalkalivibrio sulfidiphilus (strain HL-EbGR7), this protein is Beta-hexosaminidase.